We begin with the raw amino-acid sequence, 327 residues long: Zinc transport protein ZntB (327 aa).

Over 1–273 (MEAIKGSDVN…ARRTYTMSLM (273 aa)) the chain is Cytoplasmic. The helical transmembrane segment at 274–294 (AMVFLPSTFLTGLFGVNLGGI) threads the bilayer. Residues 295 to 300 (PGGGWQ) are Periplasmic-facing. The chain crosses the membrane as a helical span at residues 301–321 (FGFSIFCILLVVLIGGVALWL). The Cytoplasmic portion of the chain corresponds to 322 to 327 (HRSKWL).

The protein belongs to the CorA metal ion transporter (MIT) (TC 1.A.35) family.

It is found in the cell inner membrane. The enzyme catalyses Zn(2+)(out) + H(+)(out) = Zn(2+)(in) + H(+)(in). Zinc transporter. Acts as a Zn(2+):proton symporter, which likely mediates zinc ion uptake. The protein is Zinc transport protein ZntB of Escherichia coli O6:K15:H31 (strain 536 / UPEC).